Here is a 317-residue protein sequence, read N- to C-terminus: MARRSRGRFIDGIVLLDKDTGMSSNFALQRVKRLFNANKAGHTGALDPLATGMLPICLGEATKFSQHLLDADKRYTVTAKLGERTDTSDSDGEVVQTRPINFTQELLMESLEHFRGETMQVPSMYSALKHEGQPLYKYAREGIEVPRKARPINVFELNFISLEGDELTLDIHCSKGTYIRTITDDLGEMLGCGAHVIMLRRTQVAGYPYERMVSLEQLNEMVSQAEADGVEAKSVLDPLLLPMDTAVSKFREINLAESQAPYLMNGNPVHASGLVADEIVRITIGEEHKFVGIGAMNDDGMLAPKRLIVIREDEVKA.

D47 serves as the catalytic Nucleophile.

It belongs to the pseudouridine synthase TruB family. Type 1 subfamily.

The enzyme catalyses uridine(55) in tRNA = pseudouridine(55) in tRNA. Its function is as follows. Responsible for synthesis of pseudouridine from uracil-55 in the psi GC loop of transfer RNAs. The protein is tRNA pseudouridine synthase B of Shewanella woodyi (strain ATCC 51908 / MS32).